Consider the following 215-residue polypeptide: L-fuculose phosphate aldolase (215 aa).

Residues Gly28–Asn29, Thr43–Gly44, and Ser71–Ser72 each bind substrate. Glu73 (proton donor/acceptor) is an active-site residue. 4 residues coordinate Zn(2+): Glu73, His92, His94, and His155.

Belongs to the aldolase class II family. AraD/FucA subfamily. In terms of assembly, homotetramer. Requires Zn(2+) as cofactor.

The enzyme catalyses L-fuculose 1-phosphate = (S)-lactaldehyde + dihydroxyacetone phosphate. It participates in carbohydrate degradation; L-fucose degradation; L-lactaldehyde and glycerone phosphate from L-fucose: step 3/3. Involved in the degradation of L-fucose and D-arabinose. Catalyzes the reversible cleavage of L-fuculose 1-phosphate (Fuc1P) to yield dihydroxyacetone phosphate (DHAP) and L-lactaldehyde. The chain is L-fuculose phosphate aldolase from Escherichia coli O6:H1 (strain CFT073 / ATCC 700928 / UPEC).